Consider the following 859-residue polypeptide: MDEPESESPASILASVRAQEAQFELLSRALEEERRHVTAQLDRVWVTPQEPPLANGSLTRRQQDGLPFLYTPTRMEAHSVHADERYVIDDSSYKSCTLTDESRCSEIPIQTVVGYSQTLDRPYREAAGSGGAYTTVPRNYHFRGPGVDSTMPLISQSPHPGYSSLSRPNQRYRSVDPFRGPGYGPQPQVRGGGLGGSQSDLLSGRIYGSEDAYGLEDDRRSLGGFIDGPDYATTGRRGANGGDPRRRLRSYEDPLSDHFGSIPTSGSLSSLGPAPLTLAPNSGPWRHPELPEVLAMLSYTLDAVRLNAAAYLQHLSYRNEDVKREVCRLRGIPPLISLLEDPRAPIRLAACGALKNLSYGPARENKMAVKNCDGVPALARLLRRRGEGIEGRELAECVTGTLWNLSSLDSVKMELVDQALYTLTQEILVPHSGWQQDGGMQDRVEGKPRHVEWEPALVNTTGCLRNISSERSEARRKMRECEGLVDSVVHILRSEVSHGLVDSKLLENVVCLLRNISYHVHREIPHAEKYMESPQNASAETQNPSCFGVRRGKGKKASEEAVDTVDFPKQTMPAQGYDLLFQPEIVRLYISLVKSSHTPAVLEASAGAIQNLCAGNWVYGRCIRAAVRQEKGLSSLADHLTHESERVVRAICGALRNLCGDNRNRELIGKHALNSLVARLSSSSAQSSALSEDTNVCVINTIHEVISGNLEAAKRLRESQGIERLVLINKGGGRSEREIRAAGFCLQTIWGYKELRRPLEKDGWKKSDFQVSTAATSSVQGYDDSTLPLIDRNLKNEKKSVNADIPLNDFIADQFTHNGDSSNRLPTRSDELSELDPLKECSVSAGGSLNLGDAEDQRV.

Residues 15–44 (SVRAQEAQFELLSRALEEERRHVTAQLDRV) adopt a coiled-coil conformation. The interval 226–254 (IDGPDYATTGRRGANGGDPRRRLRSYEDP) is disordered. Basic and acidic residues predominate over residues 243–254 (DPRRRLRSYEDP). ARM repeat units follow at residues 279–317 (APNSGPWRHPELPEVLAMLSYTLDAVRLNAAAYLQHLSY), 320–359 (EDVKREVCRLRGIPPLISLLEDPRAPIRLAACGALKNLSY), 363–401 (RENKMAVKNCDGVPALARLLRRRGEGIEGRELAECVTGT), 402–446 (LWNL…RVEG), 464–503 (LRNISSERSEARRKMRECEGLVDSVVHILRSEVSHGLVDS), 513–552 (LRNISYHVHREIPHAEKYMESPQNASAETQNPSCFGVRRG), 574–614 (AQGY…NLCA), 621–660 (RCIRAAVRQEKGLSSLADHLTHESERVVRAICGALRNLCG), 661–700 (DNRNRELIGKHALNSLVARLSSSSAQSSALSEDTNVCVIN), and 701–746 (TIHE…GFCL).

The protein belongs to the beta-catenin family. As to quaternary structure, interacts with C-cadherin and with zbtb33. In terms of tissue distribution, ubiquitously expressed.

The protein resides in the cell junction. Its subcellular location is the adherens junction. It is found in the cytoplasm. It localises to the nucleus. The protein localises to the cell membrane. In terms of biological role, key regulator of cell-cell adhesion that associates with and regulates the cell adhesion properties of both C-, E- and N-cadherins, being critical for their surface stability. Beside cell-cell adhesion, regulates gene transcription through several transcription factors including ZBTB33/Kaiso2 and GLIS2, and the activity of Rho family GTPases and downstream cytoskeletal dynamics. Implicated both in cell transformation by SRC and in ligand-induced receptor signaling through the EGF, PDGF, CSF-1 and ERBB2 receptors. Required for gastrulation, axial elongation and development of the craniofacial skeleton and eye. The chain is Catenin delta-1 (ctnnd1) from Xenopus laevis (African clawed frog).